We begin with the raw amino-acid sequence, 213 residues long: Penicillin-binding protein activator LpoB (213 aa).

The first 19 residues, 1–19, serve as a signal peptide directing secretion; the sequence is MMKMNRYALVAALAIFLSG. C20 carries the N-palmitoyl cysteine lipid modification. C20 carries S-diacylglycerol cysteine lipidation. Positions 26 to 71 are disordered; that stretch reads PAPVDEVKPAPEQPAEPQQPVPVVPSVPTIPQQPGPIEHEDQTAQP. Residues 36-50 are compositionally biased toward pro residues; it reads PEQPAEPQQPVPVVP.

The protein belongs to the LpoB family. In terms of assembly, interacts with PBP1b.

The protein localises to the cell outer membrane. Regulator of peptidoglycan synthesis that is essential for the function of penicillin-binding protein 1B (PBP1b). The chain is Penicillin-binding protein activator LpoB from Citrobacter koseri (strain ATCC BAA-895 / CDC 4225-83 / SGSC4696).